The sequence spans 250 residues: V-type proton ATPase subunit D (250 aa).

It belongs to the V-ATPase D subunit family. As to quaternary structure, V-ATPase is a heteromultimeric enzyme made up of two complexes: the ATP-hydrolytic V1 complex and the proton translocation V0 complex. The V1 complex consists of three catalytic AB heterodimers that form a heterohexamer, three peripheral stalks each consisting of EG heterodimers, one central rotor including subunits D and F, and the regulatory subunits C and H. The proton translocation complex V0 consists of the proton transport subunit a, a ring of proteolipid subunits c9c'', rotary subunit d, subunits e and f, and two accessory subunits ATP6AP1/Ac45 and ATP6AP2/PRR.

In terms of biological role, subunit of the V1 complex of vacuolar(H+)-ATPase (V-ATPase), a multisubunit enzyme composed of a peripheral complex (V1) that hydrolyzes ATP and a membrane integral complex (V0) that translocates protons. V-ATPase is responsible for acidifying and maintaining the pH of intracellular compartments and in some cell types, is targeted to the plasma membrane, where it is responsible for acidifying the extracellular environment. This chain is V-type proton ATPase subunit D (VATPD), found in Suberites domuncula (Sponge).